Here is a 527-residue protein sequence, read N- to C-terminus: Putative zinc finger CCCH domain-containing protein 64 (527 aa).

Residues 103–127 (GQLRSTQTTSKRKAASRKGQREQRV) form a disordered region. The segment at 213 to 241 (RPGEPFCRYYMKFGECKHMTFCKYNHPKD) adopts a C3H1-type zinc-finger fold.

The chain is Putative zinc finger CCCH domain-containing protein 64 from Oryza sativa subsp. japonica (Rice).